Consider the following 217-residue polypeptide: Ribonuclease HII (217 aa).

The RNase H type-2 domain occupies 16-217 (YCIAGVDEVG…VARVLGTYHD (202 aa)). A divalent metal cation is bound by residues aspartate 22, glutamate 23, and aspartate 114.

This sequence belongs to the RNase HII family. Mn(2+) is required as a cofactor. The cofactor is Mg(2+).

It is found in the cytoplasm. It carries out the reaction Endonucleolytic cleavage to 5'-phosphomonoester.. Functionally, endonuclease that specifically degrades the RNA of RNA-DNA hybrids. This Colwellia psychrerythraea (strain 34H / ATCC BAA-681) (Vibrio psychroerythus) protein is Ribonuclease HII.